A 103-amino-acid polypeptide reads, in one-letter code: Large ribosomal subunit protein bL21 (103 aa).

Belongs to the bacterial ribosomal protein bL21 family. In terms of assembly, part of the 50S ribosomal subunit. Contacts protein L20.

In terms of biological role, this protein binds to 23S rRNA in the presence of protein L20. This Borrelia garinii subsp. bavariensis (strain ATCC BAA-2496 / DSM 23469 / PBi) (Borreliella bavariensis) protein is Large ribosomal subunit protein bL21.